We begin with the raw amino-acid sequence, 2544 residues long: Highly reducing polyketide synthase pkhB (2544 aa).

A Ketosynthase family 3 (KS3) domain is found at S9–S438. Catalysis depends on for beta-ketoacyl synthase activity residues C182, H317, and H358. Residues V566–E876 form a malonyl-CoA:ACP transacylase (MAT) domain region. The N-terminal hotdog fold stretch occupies residues H948–V1082. Positions H948–S1252 are dehydratase (DH) domain. Residues H948–A1254 form the PKS/mFAS DH domain. The active-site Proton acceptor; for dehydratase activity is the H980. The segment at Y1095–A1254 is C-terminal hotdog fold. D1165 (proton donor; for dehydratase activity) is an active-site residue. A methyltransferase (CMet) domain region spans residues S1398–D1573. The tract at residues G1826–L2142 is enoyl reductase (ER) domain. The segment at A2169–S2356 is ketoreductase (KR) domain. Residues E2462 to S2539 form the Carrier domain. The residue at position 2499 (S2499) is an O-(pantetheine 4'-phosphoryl)serine.

It depends on pantetheine 4'-phosphate as a cofactor.

The protein operates within secondary metabolite biosynthesis. Functionally, highly reducing polyketide synthase; part of the pkh gene cluster that mediates the biosynthesis of 2,4-dihydroxy-6-[(3E,5E,7E)-2-oxonona-3,5,7-trienyl]benzaldehyde. The highly reducing polyketide synthase pkhB first produces the (2E,4E,6E)-octa-2,4,6-trienyl strater unit for the non-reducing polyketide synthase pkhA. This octatrienoyl starter is then loaded onto the SAT domain of the NR-PKS pkhA to be condensed with 4 malonyl-CoA units to yield 2,4-dihydroxy-6-[(3E,5E,7E)-2-oxonona-3,5,7-trienyl]benzaldehyde. The protein is Highly reducing polyketide synthase pkhB of Emericella nidulans (strain FGSC A4 / ATCC 38163 / CBS 112.46 / NRRL 194 / M139) (Aspergillus nidulans).